Reading from the N-terminus, the 332-residue chain is Protein FAM131B (332 aa).

The segment at 1–22 is disordered; the sequence is MDSTSSLHGSSLHRPSTEQTRT. 3 positions are modified to phosphoserine: serine 47, serine 114, and serine 117. The disordered stretch occupies residues 221-332; the sequence is LGPAFDDSQP…FDEEEGDANN (112 aa). Composition is skewed to basic and acidic residues over residues 272-281 and 288-302; these read PVEEEKRPLA and AGCR…REDP. 3 positions are modified to phosphoserine: serine 295, serine 297, and serine 313. Threonine 316 carries the post-translational modification Phosphothreonine. Phosphoserine occurs at positions 317, 318, and 322. Residues 323 to 332 are compositionally biased toward acidic residues; sequence FDEEEGDANN.

The protein belongs to the FAM131 family.

The polypeptide is Protein FAM131B (Fam131b) (Rattus norvegicus (Rat)).